Consider the following 86-residue polypeptide: Conidiation-specific protein 10 (86 aa).

The segment covering 1–11 (MAGTGNDNPGN) has biased composition (polar residues). The interval 1–86 (MAGTGNDNPG…SGGTGADDDE (86 aa)) is disordered. Residues 49 to 58 (SKGGKASSGS) show a composition bias toward low complexity. Over residues 62–71 (GSEKAREAGR) the composition is skewed to basic and acidic residues. Gly residues predominate over residues 75 to 86 (KASGGTGADDDE).

The protein belongs to the con-10 family.

The polypeptide is Conidiation-specific protein 10 (con-10) (Neurospora crassa (strain ATCC 24698 / 74-OR23-1A / CBS 708.71 / DSM 1257 / FGSC 987)).